We begin with the raw amino-acid sequence, 620 residues long: MRRQQSGLACEECRRRKARCDRVRPQCGICADAGRTCIVVDKRSPRGPKKGQLKDLRYRLDGTIGCDMDELQMLNFASSESISASDGQEAIDWTLAYDCREERSGTWNHLDISNPRPCIITPISPIQTSASEMTPKGELDMSDLMQADLDLLYFERVHPIVPMIHKRRYLSWANEKTVSPARACLRSAMRTIAAAMSAQFCAFSDKLYACTRSMLEMQDVQGENGLPWMTTTRASRRRIEHEMIQAWLLLAHCEFLRKPEQDALLASTRAVRLLQLSRLFDIDMHDDETSPNENSGSCPSVSPSTTQNLPDEAWIETEEKRRTLWTAFVLDCLSSMLSDRPSMLHEEMINTRLPMPERDFQGGQRPTPMGFLPETMGKTGDCETLSSFAQCVVLANLFGRCIAHRRLAQSVSFPESGSESKSRQFWMRHEWLAAAAAHATRTMPPTQAPNECKSETTKCDPLAAFNRILAYSACISLSETAEARAWETLDDHTLALSYRQVASQAAYEIALLIQKAPRIAFFKMHPVLPNAIYLAARFLRTTTPHFATPAEHDHNSIHHLLVALGYLSSVNNLARDLLVKAEADVGKSARIATEVTGSNWDALMGDTSRHIGMMETSISV.

The zn(2)-C6 fungal-type DNA-binding region spans 10–37 (CEECRRRKARCDRVRPQCGICADAGRTC). The tract at residues 285–308 (HDDETSPNENSGSCPSVSPSTTQN) is disordered. Positions 291–308 (PNENSGSCPSVSPSTTQN) are enriched in polar residues.

The protein resides in the nucleus. Its function is as follows. Transcription factor that acts as the main regulator of the gene cluster that mediates the biosynthesis of sorbicillinoids, a diverse group of yellow secondary metabolites that restrict growth of competing pathogenic fungi but not of bacteria. This chain is Sorbicillinoid biosynthetic cluster transcription factor 1, found in Penicillium rubens (strain ATCC 28089 / DSM 1075 / NRRL 1951 / Wisconsin 54-1255) (Penicillium chrysogenum).